Consider the following 438-residue polypeptide: 2-(3-amino-3-carboxypropyl)histidine synthase subunit 1 (438 aa).

Positions Met-1–Ser-24 are disordered. 3 residues coordinate [4Fe-4S] cluster: Cys-110, Cys-214, and Cys-342. Residues Leu-402–Pro-438 form a disordered region. At Ser-418 the chain carries Phosphoserine.

The protein belongs to the DPH1/DPH2 family. DPH1 subfamily. As to quaternary structure, component of the 2-(3-amino-3-carboxypropyl)histidine synthase complex composed of DPH1, DPH2, DPH3 and a NADH-dependent reductase. Interacts with DPH2. Interacts with RBM8A. Requires [4Fe-4S] cluster as cofactor. Strongly expressed in kidney and liver. Moderately expressed in brain, skin and testis. Weakly expressed in heart, lung, small intestine, spleen, stomach and thymus.

It localises to the nucleus. The protein localises to the cytoplasm. The enzyme catalyses L-histidyl-[translation elongation factor 2] + S-adenosyl-L-methionine = 2-[(3S)-amino-3-carboxypropyl]-L-histidyl-[translation elongation factor 2] + S-methyl-5'-thioadenosine + H(+). It participates in protein modification; peptidyl-diphthamide biosynthesis. Its function is as follows. Catalyzes the first step of diphthamide biosynthesis, a post-translational modification of histidine which occurs in elongation factor 2. DPH1 and DPH2 transfer a 3-amino-3-carboxypropyl (ACP) group from S-adenosyl-L-methionine (SAM) to a histidine residue, the reaction is assisted by a reduction system comprising DPH3 and a NADH-dependent reductase. Acts as a tumor suppressor. This Mus musculus (Mouse) protein is 2-(3-amino-3-carboxypropyl)histidine synthase subunit 1.